Here is an 805-residue protein sequence, read N- to C-terminus: Na(+)/H(+) antiporter subunit A1 (805 aa).

The next 20 membrane-spanning stretches (helical) occupy residues 1–21 (MSLL…IPFV), 30–50 (LGWF…SYIS), 79–99 (LGLL…LYSI), 117–137 (LFMG…LYLF), 166–186 (MLVT…LSIA), 201–221 (EIQT…GAMT), 226–246 (FPFY…SAYL), 265–285 (IFAV…ITLF), 300–320 (ILAF…GVGA), 337–357 (FTAA…LFMI), 377–397 (LTIM…MAGI), 427–447 (LGIL…VYSI), 480–500 (ILAI…GSII), 531–551 (LGIY…IYLL), 591–611 (LVII…VTPF), 623–643 (PFEL…IFAK), 646–666 (LFSI…FIFF), 671–691 (LALT…LCFY), 707–727 (LVNI…GLIA), and 766–786 (TLFE…MIKL).

It belongs to the CPA3 antiporters (TC 2.A.63) subunit A family. As to quaternary structure, may form a heterooligomeric complex that consists of seven subunits: mnhA1, mnhB1, mnhC1, mnhD1, mnhE1, mnhF1 and mnhG1.

The protein resides in the cell membrane. Its function is as follows. Mnh complex is a Na(+)/H(+) antiporter involved in Na(+) excretion. The polypeptide is Na(+)/H(+) antiporter subunit A1 (mnhA1) (Staphylococcus saprophyticus subsp. saprophyticus (strain ATCC 15305 / DSM 20229 / NCIMB 8711 / NCTC 7292 / S-41)).